Reading from the N-terminus, the 170-residue chain is ATP synthase F(1) complex subunit delta, mitochondrial (170 aa).

The transit peptide at 1-33 directs the protein to the mitochondrion; it reads MIRSIIKSSNNLLKSNVAINSNKRFFATEASAT.

Belongs to the ATPase epsilon chain family. As to quaternary structure, component of the ATP synthase complex composed at least of ATP5F1A/subunit alpha, ATP5F1B/subunit beta, ATP5MC1/subunit c (homooctomer), MT-ATP6/subunit a, MT-ATP8/subunit 8, ATP5ME/subunit e, ATP5MF/subunit f, ATP5MG/subunit g, ATP5MK/subunit k, ATP5MJ/subunit j, ATP5F1C/subunit gamma, ATP5F1D/subunit delta, ATP5F1E/subunit epsilon, ATP5PF/subunit F6, ATP5PB/subunit b, ATP5PD/subunit d, ATP5PO/subunit OSCP. ATP synthase complex consists of a soluble F(1) head domain (subunits alpha(3) and beta(3)) - the catalytic core - and a membrane F(0) domain - the membrane proton channel (subunits c, a, 8, e, f, g, k and j). These two domains are linked by a central stalk (subunits gamma, delta, and epsilon) rotating inside the F1 region and a stationary peripheral stalk (subunits F6, b, d, and OSCP).

The protein localises to the mitochondrion. It is found in the mitochondrion inner membrane. Subunit delta, of the mitochondrial membrane ATP synthase complex (F(1)F(0) ATP synthase or Complex V) that produces ATP from ADP in the presence of a proton gradient across the membrane which is generated by electron transport complexes of the respiratory chain. ATP synthase complex consist of a soluble F(1) head domain - the catalytic core - and a membrane F(1) domain - the membrane proton channel. These two domains are linked by a central stalk rotating inside the F(1) region and a stationary peripheral stalk. During catalysis, ATP synthesis in the catalytic domain of F(1) is coupled via a rotary mechanism of the central stalk subunits to proton translocation. In vivo, can only synthesize ATP although its ATP hydrolase activity can be activated artificially in vitro. With the central stalk subunit gamma, is essential for the biogenesis of F(1) catalytic part of the ATP synthase complex namely in the formation of F1 assembly intermediate. The sequence is that of ATP synthase F(1) complex subunit delta, mitochondrial from Dictyostelium discoideum (Social amoeba).